We begin with the raw amino-acid sequence, 263 residues long: Bidirectional sugar transporter SWEET3 (263 aa).

Residues 1–7 (MGDKLRL) lie on the Extracellular side of the membrane. The helical transmembrane segment at 8 to 28 (SIGILGNGASLLLYTAPIVTF) threads the bilayer. The MtN3/slv 1 domain maps to 9–97 (IGILGNGASL…FIYFYYASPK (89 aa)). Topologically, residues 29–42 (SRVFKKKSTEEFSC) are cytoplasmic. Residues 43-63 (FPYVMTLFNCLIYTWYGLPIV) traverse the membrane as a helical segment. Over 64-71 (SHLWENLP) the chain is Extracellular. The helical transmembrane segment at 72–92 (LVTINGVGILLESIFIFIYFY) threads the bilayer. Topologically, residues 93-103 (YASPKEKIKVG) are cytoplasmic. The chain crosses the membrane as a helical span at residues 104–124 (VTFVPVIVGFGLTTAISALVF). Residues 125-132 (DDHRHRKS) are Extracellular-facing. Residues 133–153 (FVGSVGLVASISMYGSPLVVM) form a helical membrane-spanning segment. A MtN3/slv 2 domain is found at 133–217 (FVGSVGLVAS…ILYFKYKNKK (85 aa)). The Cytoplasmic portion of the chain corresponds to 154–165 (KKVIETRSVEYM). Residues 166–186 (PFYLSFFSFLASSLWLAYGLL) form a helical membrane-spanning segment. The Extracellular segment spans residues 187–190 (SHDL). A helical transmembrane segment spans residues 191-211 (FLASPNMVATPLGILQLILYF). At 212 to 263 (KYKNKKDLAPTTMVITKRNDHDDKNKATLEFVVDVDRNSDTNEKNSNNASSI) the chain is on the cytoplasmic side.

This sequence belongs to the SWEET sugar transporter family. In terms of assembly, forms heterooligomers with SWEET11, SWEET13 and SWEET17.

It is found in the cell membrane. Its function is as follows. Mediates both low-affinity uptake and efflux of sugar across the plasma membrane. This Arabidopsis thaliana (Mouse-ear cress) protein is Bidirectional sugar transporter SWEET3.